The primary structure comprises 37 residues: uncharacterized protein (37 aa).

It belongs to the poxviridae A56.5 protein family.

This is an uncharacterized protein from Vaccinia virus (strain Western Reserve) (VACV).